A 25-amino-acid chain; its full sequence is Chitinolytic alpha-amylase inhibitor PvCAI (25 aa).

In terms of assembly, homodimer.

It catalyses the reaction Random endo-hydrolysis of N-acetyl-beta-D-glucosaminide (1-&gt;4)-beta-linkages in chitin and chitodextrins.. Its function is as follows. Alpha-amylase inhibitor, active against Z.subfasciatus alpha-amylase (ZSA) but not porcine pancreatic alpha-amylase (PPA). Has chitinase activity. This Phaseolus vulgaris (Kidney bean) protein is Chitinolytic alpha-amylase inhibitor PvCAI.